We begin with the raw amino-acid sequence, 784 residues long: MMIPARHMPSMIGRNGAAYGSSSALSLSQPNLLDNHQFQQAFQHQQQQHHLLDQIPATTAESGDNMIRSRASDPLGGDEFESKSGSENVDGVSVDDQDPNQRPRKKRYHRHTQHQIQEMEAFFKECPHPDDKQRKELSRELGLEPLQVKFWFQNKRTQMKNQHERHENSQLRSDNEKLRAENMRYKEALSSASCPNCGGPAALGEMSFDEHHLRIENARLREEIDRISAIAAKYVGKPMVPFPVLSNPMAAAASRAPLDLPVAPYGVPGDMFGGGGAGELLRGVQSEVDKPMIVELAVAAMEELVRMAQLDEPLWSVAPPLDATAAAMETLSEEEYARMFPRGLGPKQYGLRSEASRDSAVVIMTHANLVEILMDANQYAAVFSNIVSRAITLEVLSTGVAGNYNGALQVMSVEFQVPSPLVPTRESYFVRYCKQNADGTWAVVDVSLDSLRPSPVLKCRRRPSGCLIQEMPNGYSKVTWVEHVEVDDRSVHNIYKLLVNSGLAFGARRWVGTLDRQCERLASVMASNIPTSDIGVITSSEGRKSMLKLAERMVVSFCGGVTASVAHQWTTLSGSGAEDVRVMTRKSVDDPGRPPGIVLNAATSFWLPVPPKRVFDFLRDESSRSEWDILSNGGIVQEMAHIANGRDQGNCVSLLRVNSSNSNQSNMLILQESCTDASGSYVIYAPVDVVAMNVVLNGGDPDYVALLPSGFAILPDGPAHDGGDGDGGVGVGSGGSLLTVAFQILVDSVPTAKLSLGSVATVNSLIACTVERIKAAVSGESNPQ.

Positions 60–113 are disordered; sequence AESGDNMIRSRASDPLGGDEFESKSGSENVDGVSVDDQDPNQRPRKKRYHRHTQ. Residues 102-113 are compositionally biased toward basic residues; sequence RPRKKRYHRHTQ. The homeobox DNA-binding region spans 104–163; that stretch reads RKKRYHRHTQHQIQEMEAFFKECPHPDDKQRKELSRELGLEPLQVKFWFQNKRTQMKNQH. The stretch at 158-234 forms a coiled coil; that stretch reads QMKNQHERHE…DRISAIAAKY (77 aa). The START domain occupies 286-523; that stretch reads SEVDKPMIVE…LDRQCERLAS (238 aa).

Belongs to the HD-ZIP homeobox family. Class IV subfamily.

It is found in the nucleus. Probable transcription factor. The sequence is that of Homeobox-leucine zipper protein ROC2 (ROC2) from Oryza sativa subsp. japonica (Rice).